A 362-amino-acid chain; its full sequence is Serpentine receptor class epsilon-37 (362 aa).

7 helical membrane-spanning segments follow: residues 29–49, 67–87, 127–147, 170–190, 204–224, 260–280, and 288–308; these read IFYV…YILV, IMMC…IVLI, IYFA…AVLA, IPIL…YQTT, IFIG…NLAW, LVVS…VLLF, and FFVH…SLTL.

The protein belongs to the nematode receptor-like protein sre family.

It is found in the membrane. The chain is Serpentine receptor class epsilon-37 (sre-37) from Caenorhabditis elegans.